The primary structure comprises 126 residues: Protein ApaG (126 aa).

The 125-residue stretch at 2-126 folds into the ApaG domain; that stretch reads SALDTSIRVE…FRLATPGLLH (125 aa).

This chain is Protein ApaG, found in Shewanella baltica (strain OS223).